A 470-amino-acid chain; its full sequence is Cyclin-B1-3 (470 aa).

This sequence belongs to the cyclin family. Cyclin AB subfamily.

The protein is Cyclin-B1-3 (CYCB1-3) of Oryza sativa subsp. japonica (Rice).